A 1068-amino-acid chain; its full sequence is Protein AF-10 (1068 aa).

The segment at 22-74 (IGGCCVCSDERGWAENPLVYCDGHGCSVAVHQACYGIVQVPTGPWFCRKCESQ) adopts a PHD-type 1 zinc-finger fold. The C2HC pre-PHD-type zinc finger occupies 79-112 (RVRCELCPHKDGALKRTDNGGWAHVVCALYIPEV). Residues 80 to 287 (VRCELCPHKD…SLKRLEDTTA (208 aa)) are self-association. The tract at residues 106–190 (ALYIPEVQFA…EGNGADNVQY (85 aa)) is required for interaction with histone H3. The PHD-type 2 zinc finger occupies 135 to 198 (KTCYICDEQG…QYCGYCKYHF (64 aa)). Positions 141 to 233 (DEQGRESKAA…QDKHHEKEKK (93 aa)) are interaction with FSTL3. Residues 206-260 (RGSNRSYDQSLSDSSSHSQDKHHEKEKKKYKEKDKHKQKHKKQPEPSPALVPSLT) form a disordered region. Residues 211–222 (SYDQSLSDSSSH) are compositionally biased toward low complexity. Position 217 is a phosphoserine (Ser217). A compositionally biased stretch (basic and acidic residues) spans 223–240 (SQDKHHEKEKKKYKEKDK). Ser252 is subject to Phosphoserine. Lys280 participates in a covalent cross-link: Glycyl lysine isopeptide (Lys-Gly) (interchain with G-Cter in SUMO2). Positions 291-305 (NANFQEVSAHTSSGK) are enriched in polar residues. Residues 291–505 (NANFQEVSAH…SSASPTSSVA (215 aa)) form a disordered region. The span at 306-317 (DVSETRGSEGKG) shows a compositional bias: basic and acidic residues. The segment at 311-674 (RGSEGKGKKS…QDLGDNSRNL (364 aa)) is DNA-binding. The span at 352–372 (SFSGTPGSVKSSSGSSVQSPQ) shows a compositional bias: low complexity. Polar residues-rich tracts occupy residues 387–396 (YSHSQQSSAT) and 404–446 (SGSQ…SSLP). Residue Ser436 is modified to Phosphoserine. Over residues 465 to 483 (EKKRKGNKQSKHGPGRPKG) the composition is skewed to basic residues. Low complexity predominate over residues 490–505 (VSHLSVSSASPTSSVA). Ser532 bears the Phosphoserine mark. The segment covering 583–594 (SGSGSSTPVSSS) has biased composition (low complexity). Disordered regions lie at residues 583-612 (SGSG…ALSP) and 660-708 (NNQT…SLEN). Polar residues-rich tracts occupy residues 595-604 (HLPQQSSGHL) and 660-673 (NNQT…NSRN). Low complexity predominate over residues 674 to 694 (LVGRGSSPRGSLSPRSPVSSL). 3 positions are modified to phosphoserine: Ser684, Ser686, and Ser689. A transactivation domain; required for DOT1L-binding region spans residues 703 to 784 (NSSLENLPPV…NAQLSVPFPT (82 aa)). The tract at residues 750–778 (LQVENRRLEEQIKNLTAKKERLQLLNAQL) is leucine-zipper. Over residues 800-814 (AQTAPTTDSLNSSKS) the composition is skewed to polar residues. The disordered stretch occupies residues 800–865 (AQTAPTTDSL…SPAQQGSGVS (66 aa)). 2 stretches are compositionally biased toward low complexity: residues 834 to 848 (LTSS…SALS) and 855 to 865 (QSPAQQGSGVS).

As to quaternary structure, self-associates. Interacts with FSTL3 isoform 2; the interaction enhances MLLT10 in vitro transcriptional activity and self-association. Interacts with YEATS4. Interacts with SS18. Interacts with DOT1L; this interaction also occurs with the KMT2A/MLL1 fusion protein. Interacts with histone H3; interaction is necessary for MLLT10 binding to nucleosomes; interaction is inhibited by histone H3 'Lys-27' methylations (H3K27me1, H3K27me2 and H3K27me3) amd acetylation; interaction stabilizes association of MLLT10 at chromatin; interaction is essential for histone H3 'Lys-79' dimethylation (H3K79me2). Expressed abundantly in testis.

The protein localises to the nucleus. Probably involved in transcriptional regulation. In vitro or as fusion protein with KMT2A/MLL1 has transactivation activity. Binds to cruciform DNA. In cells, binding to unmodified histone H3 regulates DOT1L functions including histone H3 'Lys-79' dimethylation (H3K79me2) and gene activation. The polypeptide is Protein AF-10 (Homo sapiens (Human)).